The chain runs to 153 residues: Large ribosomal subunit protein uL30 (153 aa).

This sequence belongs to the universal ribosomal protein uL30 family. Part of the 50S ribosomal subunit.

The polypeptide is Large ribosomal subunit protein uL30 (Methanospirillum hungatei JF-1 (strain ATCC 27890 / DSM 864 / NBRC 100397 / JF-1)).